The chain runs to 170 residues: Crossover junction endodeoxyribonuclease RuvC (170 aa).

Residues Asp-9, Glu-70, and Asp-145 contribute to the active site. Mg(2+) contacts are provided by Asp-9, Glu-70, and Asp-145.

This sequence belongs to the RuvC family. As to quaternary structure, homodimer which binds Holliday junction (HJ) DNA. The HJ becomes 2-fold symmetrical on binding to RuvC with unstacked arms; it has a different conformation from HJ DNA in complex with RuvA. In the full resolvosome a probable DNA-RuvA(4)-RuvB(12)-RuvC(2) complex forms which resolves the HJ. Mg(2+) is required as a cofactor.

It localises to the cytoplasm. It catalyses the reaction Endonucleolytic cleavage at a junction such as a reciprocal single-stranded crossover between two homologous DNA duplexes (Holliday junction).. The RuvA-RuvB-RuvC complex processes Holliday junction (HJ) DNA during genetic recombination and DNA repair. Endonuclease that resolves HJ intermediates. Cleaves cruciform DNA by making single-stranded nicks across the HJ at symmetrical positions within the homologous arms, yielding a 5'-phosphate and a 3'-hydroxyl group; requires a central core of homology in the junction. The consensus cleavage sequence is 5'-(A/T)TT(C/G)-3'. Cleavage occurs on the 3'-side of the TT dinucleotide at the point of strand exchange. HJ branch migration catalyzed by RuvA-RuvB allows RuvC to scan DNA until it finds its consensus sequence, where it cleaves and resolves the cruciform DNA. This Chlamydia trachomatis serovar A (strain ATCC VR-571B / DSM 19440 / HAR-13) protein is Crossover junction endodeoxyribonuclease RuvC.